We begin with the raw amino-acid sequence, 95 residues long: Ferredoxin-like protein FixX (95 aa).

The protein belongs to the bacterial-type ferredoxin family. FixX subfamily.

In terms of biological role, could be part of an electron transfer system required for anaerobic carnitine reduction. Could be a 3Fe-4S cluster-containing protein. The sequence is that of Ferredoxin-like protein FixX (fixX) from Escherichia coli O157:H7.